The following is a 355-amino-acid chain: tRNA uridine(34) hydroxylase (355 aa).

Residues 146–240 form the Rhodanese domain; the sequence is DDPDTVFVDM…YARQAKAQGL (95 aa). Cys200 serves as the catalytic Cysteine persulfide intermediate.

Belongs to the TrhO family.

The catalysed reaction is uridine(34) in tRNA + AH2 + O2 = 5-hydroxyuridine(34) in tRNA + A + H2O. In terms of biological role, catalyzes oxygen-dependent 5-hydroxyuridine (ho5U) modification at position 34 in tRNAs. The polypeptide is tRNA uridine(34) hydroxylase (Pectobacterium atrosepticum (strain SCRI 1043 / ATCC BAA-672) (Erwinia carotovora subsp. atroseptica)).